We begin with the raw amino-acid sequence, 735 residues long: Translation factor GUF1 homolog, chloroplastic (735 aa).

2 disordered regions span residues 1–38 (MAVPTIPSPACISQSANGSIISTRRSTETNPRQHPSTS) and 106–126 (PENAEKDYSKNGKAANKGVDN). Residues 1–47 (MAVPTIPSPACISQSANGSIISTRRSTETNPRQHPSTSYRCAGRVVR) constitute a chloroplast transit peptide. Positions 11–38 (CISQSANGSIISTRRSTETNPRQHPSTS) are enriched in polar residues. A compositionally biased stretch (basic and acidic residues) spans 106 to 115 (PENAEKDYSK). Residues 137 to 319 (SNIRNFSIIA…AVVKKIPPPK (183 aa)) enclose the tr-type G domain. GTP-binding positions include 146–153 (AHIDHGKS), 212–216 (DTPGH), and 266–269 (NKID).

Belongs to the TRAFAC class translation factor GTPase superfamily. Classic translation factor GTPase family. LepA subfamily.

Its subcellular location is the plastid. It is found in the chloroplast. It carries out the reaction GTP + H2O = GDP + phosphate + H(+). Functionally, promotes chloroplast protein synthesis. May act as a fidelity factor of the translation reaction, by catalyzing a one-codon backward translocation of tRNAs on improperly translocated ribosomes. This is Translation factor GUF1 homolog, chloroplastic from Physcomitrium patens (Spreading-leaved earth moss).